Here is a 498-residue protein sequence, read N- to C-terminus: ATP synthase subunit beta, chloroplastic (498 aa).

An ATP-binding site is contributed by 172–179; it reads GGAGVGKT.

Belongs to the ATPase alpha/beta chains family. In terms of assembly, F-type ATPases have 2 components, CF(1) - the catalytic core - and CF(0) - the membrane proton channel. CF(1) has five subunits: alpha(3), beta(3), gamma(1), delta(1), epsilon(1). CF(0) has four main subunits: a(1), b(1), b'(1) and c(9-12).

The protein localises to the plastid. It is found in the chloroplast thylakoid membrane. The catalysed reaction is ATP + H2O + 4 H(+)(in) = ADP + phosphate + 5 H(+)(out). Functionally, produces ATP from ADP in the presence of a proton gradient across the membrane. The catalytic sites are hosted primarily by the beta subunits. This chain is ATP synthase subunit beta, chloroplastic, found in Solanum bulbocastanum (Wild potato).